The primary structure comprises 131 residues: Snaclec coagulation factor IX/factor X-binding protein subunit A (131 aa).

In terms of domain architecture, C-type lectin spans 1–131; sequence DCLPGWSSHE…EEPQRFTCEI (131 aa). 3 cysteine pairs are disulfide-bonded: cysteine 2-cysteine 13, cysteine 30-cysteine 129, and cysteine 104-cysteine 121. Positions 41, 43, and 47 each coordinate Ca(2+). Residue glutamate 130 coordinates Ca(2+).

The protein belongs to the snaclec family. In terms of assembly, heterodimer of subunits A and B; disulfide-linked. As to expression, expressed by the venom gland.

The protein resides in the secreted. In terms of biological role, anticoagulant protein which binds to coagulation factor IX (F9) and coagulation factor X (F10) in the presence of calcium. It may bind the gamma-carboxyglutamic acid-domain regions of factors with a 1 to 1 stoichiometry. The dissociation constant (K(d)) are 6.6 nM for factor IX (F9) and 125 nM for factor X (F10). Does not bind carbohydrates. The polypeptide is Snaclec coagulation factor IX/factor X-binding protein subunit A (Echis carinatus (Saw-scaled viper)).